The primary structure comprises 56 residues: UPF0391 membrane protein Bd1438 (56 aa).

A run of 2 helical transmembrane segments spans residues 4 to 24 (AAIA…SGVA) and 33 to 53 (ILLF…LVSG).

Belongs to the UPF0391 family.

The protein resides in the cell membrane. This chain is UPF0391 membrane protein Bd1438, found in Bdellovibrio bacteriovorus (strain ATCC 15356 / DSM 50701 / NCIMB 9529 / HD100).